A 459-amino-acid polypeptide reads, in one-letter code: ATP synthase subunit beta (459 aa).

ATP is bound at residue 148 to 155; it reads GGAGVGKT.

This sequence belongs to the ATPase alpha/beta chains family. In terms of assembly, F-type ATPases have 2 components, CF(1) - the catalytic core - and CF(0) - the membrane proton channel. CF(1) has five subunits: alpha(3), beta(3), gamma(1), delta(1), epsilon(1). CF(0) has three main subunits: a(1), b(2) and c(9-12). The alpha and beta chains form an alternating ring which encloses part of the gamma chain. CF(1) is attached to CF(0) by a central stalk formed by the gamma and epsilon chains, while a peripheral stalk is formed by the delta and b chains.

It localises to the cell inner membrane. It carries out the reaction ATP + H2O + 4 H(+)(in) = ADP + phosphate + 5 H(+)(out). Its function is as follows. Produces ATP from ADP in the presence of a proton gradient across the membrane. The catalytic sites are hosted primarily by the beta subunits. In Thiobacillus denitrificans (strain ATCC 25259 / T1), this protein is ATP synthase subunit beta.